A 103-amino-acid chain; its full sequence is MYAVFQSGGKQHRVSEGQVVRLEKLEKATGETVEFDSVLMVVNGEDVKIGAPVVTGAKVVAEVVAQGRGDKIKIVKFRRRKHSRKQQGHRQWFTEVKITGIQA.

This sequence belongs to the bacterial ribosomal protein bL21 family. Part of the 50S ribosomal subunit. Contacts protein L20.

Functionally, this protein binds to 23S rRNA in the presence of protein L20. This chain is Large ribosomal subunit protein bL21, found in Mannheimia succiniciproducens (strain KCTC 0769BP / MBEL55E).